The sequence spans 582 residues: Membrane protein insertase YidC (582 aa).

Residues 3–23 (IQRALVITGIAVVSYLMIQAW) traverse the membrane as a helical segment. Positions 38–92 (QVAEQGNSSSSDSADLPSVQSQTDNSIPSAQSDNDLPSVSPADIAQPTPSSQRIE) are disordered. Positions 45–58 (SSSSDSADLPSVQS) are enriched in low complexity. Polar residues predominate over residues 59 to 74 (QTDNSIPSAQSDNDLP). 5 helical membrane-spanning segments follow: residues 357–377 (TVDY…LVFL), 394–414 (GVGN…AIFF), 464–484 (LGGC…YYVL), 495–515 (FFLW…PILM), and 541–561 (MPMI…LYWL).

It belongs to the OXA1/ALB3/YidC family. Type 1 subfamily. In terms of assembly, interacts with the Sec translocase complex via SecD. Specifically interacts with transmembrane segments of nascent integral membrane proteins during membrane integration.

The protein localises to the cell inner membrane. In terms of biological role, required for the insertion and/or proper folding and/or complex formation of integral membrane proteins into the membrane. Involved in integration of membrane proteins that insert both dependently and independently of the Sec translocase complex, as well as at least some lipoproteins. Aids folding of multispanning membrane proteins. This Alcanivorax borkumensis (strain ATCC 700651 / DSM 11573 / NCIMB 13689 / SK2) protein is Membrane protein insertase YidC.